Reading from the N-terminus, the 438-residue chain is Proline--tRNA ligase (438 aa).

Belongs to the class-II aminoacyl-tRNA synthetase family. ProS type 2 subfamily. Homodimer.

The protein localises to the cytoplasm. It catalyses the reaction tRNA(Pro) + L-proline + ATP = L-prolyl-tRNA(Pro) + AMP + diphosphate. Its function is as follows. Catalyzes the attachment of proline to tRNA(Pro) in a two-step reaction: proline is first activated by ATP to form Pro-AMP and then transferred to the acceptor end of tRNA(Pro). The protein is Proline--tRNA ligase of Rhodopseudomonas palustris (strain TIE-1).